The sequence spans 972 residues: Hemoglobin and hemoglobin-haptoglobin-binding protein (972 aa).

The N-terminal stretch at 1-22 (MKANKLSAITLCILGYAHTVYA) is a signal peptide. A TonB box motif is present at residues 32–39 (ETIVVSSE). The region spanning 38–167 (SEDDSVHNKN…LGGTVSFESK (130 aa)) is the TBDR plug domain. The 798-residue stretch at 175 to 972 (DKNYHFGYKT…NFRVNAEITF (798 aa)) folds into the TBDR beta-barrel domain. A TonB C-terminal box motif is present at residues 955-972 (KRFNAPGRNFRVNAEITF).

It belongs to the TonB-dependent receptor family. Hemoglobin/haptoglobin binding protein subfamily.

The protein resides in the cell outer membrane. Acts as a receptor for hemoglobin or the hemoglobin/haptoglobin complex of the host and is required for heme uptake. May be involved in virulence. This is Hemoglobin and hemoglobin-haptoglobin-binding protein from Haemophilus ducreyi (strain 35000HP / ATCC 700724).